A 356-amino-acid polypeptide reads, in one-letter code: Peptide chain release factor 1 (356 aa).

Glutamine 230 carries the post-translational modification N5-methylglutamine. Residues alanine 279–lysine 289 are compositionally biased toward basic and acidic residues. The disordered stretch occupies residues alanine 279–glutamate 299.

It belongs to the prokaryotic/mitochondrial release factor family. Methylated by PrmC. Methylation increases the termination efficiency of RF1.

It localises to the cytoplasm. Its function is as follows. Peptide chain release factor 1 directs the termination of translation in response to the peptide chain termination codons UAG and UAA. In Caulobacter vibrioides (strain ATCC 19089 / CIP 103742 / CB 15) (Caulobacter crescentus), this protein is Peptide chain release factor 1 (prfA).